A 673-amino-acid polypeptide reads, in one-letter code: UvrABC system protein B (673 aa).

The Helicase ATP-binding domain occupies 26-414; the sequence is ANFEAGLAKQ…AGEITELVVR (389 aa). 39–46 contributes to the ATP binding site; it reads GVTGSGKT. Residues 92-115 carry the Beta-hairpin motif; that stretch reads YYDYYQPEAYVPSSDTFIEKDSSI. In terms of domain architecture, Helicase C-terminal spans 431–597; the sequence is QVDDLMSEVH…SVARPISDIM (167 aa). Residues 601 to 626 are disordered; that stretch reads REDAAEKKAGKGRSKSRQVAEEPADY. A UVR domain is found at 635–670; the sequence is AGKLKALEQKMYQHAKDLEFEAAAQIRDQILKLKAA.

Belongs to the UvrB family. Forms a heterotetramer with UvrA during the search for lesions. Interacts with UvrC in an incision complex.

Its subcellular location is the cytoplasm. The UvrABC repair system catalyzes the recognition and processing of DNA lesions. A damage recognition complex composed of 2 UvrA and 2 UvrB subunits scans DNA for abnormalities. Upon binding of the UvrA(2)B(2) complex to a putative damaged site, the DNA wraps around one UvrB monomer. DNA wrap is dependent on ATP binding by UvrB and probably causes local melting of the DNA helix, facilitating insertion of UvrB beta-hairpin between the DNA strands. Then UvrB probes one DNA strand for the presence of a lesion. If a lesion is found the UvrA subunits dissociate and the UvrB-DNA preincision complex is formed. This complex is subsequently bound by UvrC and the second UvrB is released. If no lesion is found, the DNA wraps around the other UvrB subunit that will check the other stand for damage. In Xanthomonas campestris pv. campestris (strain 8004), this protein is UvrABC system protein B.